A 141-amino-acid polypeptide reads, in one-letter code: MAIERTLSIIKPDAVAKNVIGQIYSRFEGAGLKIVASRMAHLSRGDAEKFYAVHAARPFFKDLVDFMISGPVMIQVLEGEGAILKNRDLMGATDPKKAEKGTIRADFADSIDANAVHGSDAAETAAVEIAFFFPEMNVYSR.

Positions 11, 59, 87, 93, 104, and 114 each coordinate ATP. Histidine 117 serves as the catalytic Pros-phosphohistidine intermediate.

Belongs to the NDK family. Homotetramer. Mg(2+) is required as a cofactor.

The protein localises to the cytoplasm. It carries out the reaction a 2'-deoxyribonucleoside 5'-diphosphate + ATP = a 2'-deoxyribonucleoside 5'-triphosphate + ADP. It catalyses the reaction a ribonucleoside 5'-diphosphate + ATP = a ribonucleoside 5'-triphosphate + ADP. Major role in the synthesis of nucleoside triphosphates other than ATP. The ATP gamma phosphate is transferred to the NDP beta phosphate via a ping-pong mechanism, using a phosphorylated active-site intermediate. The sequence is that of Nucleoside diphosphate kinase from Burkholderia ambifaria (strain MC40-6).